Consider the following 123-residue polypeptide: Ribosome-binding factor A (123 aa).

Belongs to the RbfA family. In terms of assembly, monomer. Binds 30S ribosomal subunits, but not 50S ribosomal subunits or 70S ribosomes.

Its subcellular location is the cytoplasm. Its function is as follows. One of several proteins that assist in the late maturation steps of the functional core of the 30S ribosomal subunit. Associates with free 30S ribosomal subunits (but not with 30S subunits that are part of 70S ribosomes or polysomes). Required for efficient processing of 16S rRNA. May interact with the 5'-terminal helix region of 16S rRNA. The sequence is that of Ribosome-binding factor A from Dechloromonas aromatica (strain RCB).